A 287-amino-acid polypeptide reads, in one-letter code: ATP synthase gamma chain (287 aa).

This sequence belongs to the ATPase gamma chain family. In terms of assembly, F-type ATPases have 2 components, CF(1) - the catalytic core - and CF(0) - the membrane proton channel. CF(1) has five subunits: alpha(3), beta(3), gamma(1), delta(1), epsilon(1). CF(0) has three main subunits: a, b and c.

The protein localises to the cell inner membrane. In terms of biological role, produces ATP from ADP in the presence of a proton gradient across the membrane. The gamma chain is believed to be important in regulating ATPase activity and the flow of protons through the CF(0) complex. In Klebsiella pneumoniae (strain 342), this protein is ATP synthase gamma chain.